The following is an 876-amino-acid chain: GRB2-associated and regulator of MAPK protein 1 (876 aa).

Residues 12-320 are CABIT; the sequence is KDVKWSSVAV…HLVKGESWPE (309 aa). A phosphotyrosine mark is found at Tyr105 and Tyr453. The tract at residues 496 to 572 is disordered; it reads IPGTLGAAVK…SPSPTLSYYS (77 aa). A necessary for interaction with GRB2 region spans residues 498-550; it reads GTLGAAVKSSDTALPPPPVPPKSEAVREECRLLNAPPVPPRSAKPLSTSPSIP. The segment covering 558–572 has biased composition (polar residues); sequence RQQTRSPSPTLSYYS. 2 positions are modified to phosphoserine: Ser610 and Ser614. Disordered regions lie at residues 626–664 and 738–763; these read WPNH…PKRN and ASET…PDLS. Polar residues-rich tracts occupy residues 631–640 and 648–658; these read SGASESQTRS and RSYSYPRQKTP. The SAM domain maps to 811-876; that stretch reads LSIEEVSKSL…QFINGWRPKI (66 aa).

The protein belongs to the GAREM family. As to quaternary structure, isoform 1 interacts with EGFR. Isoform 1 interacts (via proline-rich domain and phosphorylated at Tyr-105 and Tyr-453) with GRB2 (via SH3 domains); the interaction occurs upon EGF stimulation. Isoform 1 interacts (phosphorylated at Tyr-453) with PTPN11; the interaction increases MAPK/ERK activity and does not affect the GRB2/SOS complex formation. Isoform 2 does not interact with GRB2. In terms of processing, on EGF stimulation, phosphorylated on Tyr-105 and Tyr-453. As to expression, isoform 1 is ubiquitously expressed.

Its function is as follows. Acts as an adapter protein that plays a role in intracellular signaling cascades triggered either by the cell surface activated epidermal growth factor receptor and/or cytoplasmic protein tyrosine kinases. Promotes activation of the MAPK/ERK signaling pathway. Plays a role in the regulation of cell proliferation. This chain is GRB2-associated and regulator of MAPK protein 1 (GAREM1), found in Homo sapiens (Human).